The following is a 605-amino-acid chain: uncharacterized protein (605 aa).

Disordered stretches follow at residues 10–78 and 216–248; these read RRGG…FPPA and RAPDCPSPRTPMVKPPFRIPDAKPGLTPSVRNP. Low complexity predominate over residues 20–48; sequence AGGRPAAGGRPAAGGRPAAGSRAAAGAAG. Residues 220–233 show a composition bias toward pro residues; that stretch reads CPSPRTPMVKPPFR.

This is an uncharacterized protein from Dryophytes versicolor (chameleon treefrog).